The following is a 270-amino-acid chain: 4-hydroxy-tetrahydrodipicolinate reductase (270 aa).

Position 7 to 12 (7 to 12 (GANGKM)) interacts with NAD(+). Residue R34 coordinates NADP(+). NAD(+) is bound by residues 97–99 (GTT) and 121–124 (SGNM). H155 functions as the Proton donor/acceptor in the catalytic mechanism. (S)-2,3,4,5-tetrahydrodipicolinate is bound at residue H156. K159 acts as the Proton donor in catalysis. Position 165–166 (165–166 (GT)) interacts with (S)-2,3,4,5-tetrahydrodipicolinate.

It belongs to the DapB family.

Its subcellular location is the cytoplasm. The enzyme catalyses (S)-2,3,4,5-tetrahydrodipicolinate + NAD(+) + H2O = (2S,4S)-4-hydroxy-2,3,4,5-tetrahydrodipicolinate + NADH + H(+). The catalysed reaction is (S)-2,3,4,5-tetrahydrodipicolinate + NADP(+) + H2O = (2S,4S)-4-hydroxy-2,3,4,5-tetrahydrodipicolinate + NADPH + H(+). Its pathway is amino-acid biosynthesis; L-lysine biosynthesis via DAP pathway; (S)-tetrahydrodipicolinate from L-aspartate: step 4/4. Catalyzes the conversion of 4-hydroxy-tetrahydrodipicolinate (HTPA) to tetrahydrodipicolinate. This Bartonella quintana (strain Toulouse) (Rochalimaea quintana) protein is 4-hydroxy-tetrahydrodipicolinate reductase.